A 115-amino-acid polypeptide reads, in one-letter code: Large ribosomal subunit protein uL24 (115 aa).

Belongs to the universal ribosomal protein uL24 family. In terms of assembly, part of the 50S ribosomal subunit.

One of two assembly initiator proteins, it binds directly to the 5'-end of the 23S rRNA, where it nucleates assembly of the 50S subunit. Its function is as follows. One of the proteins that surrounds the polypeptide exit tunnel on the outside of the subunit. The chain is Large ribosomal subunit protein uL24 from Deinococcus geothermalis (strain DSM 11300 / CIP 105573 / AG-3a).